The chain runs to 390 residues: Protein phosphatase 1B (390 aa).

Basic and acidic residues predominate over residues 1–14; it reads MGAFLDKPKTEKHN. Residues 1 to 20 form a disordered region; it reads MGAFLDKPKTEKHNAHGAGN. Residue glycine 2 is the site of N-myristoyl glycine attachment. A Glycyl lysine isopeptide (Lys-Gly) (interchain with G-Cter in ISG15) cross-link involves residue lysine 12. One can recognise a PPM-type phosphatase domain in the interval 23-295; it reads RYGLSSMQGW…DNMSIVLVCF (273 aa). Mn(2+) is bound by residues aspartate 60, glycine 61, aspartate 243, and aspartate 286. Residues 371 to 390 form a disordered region; the sequence is NPNKDNDGGAGDLEDSLVAL. Serine 386 is subject to Phosphoserine.

It belongs to the PP2C family. As to quaternary structure, monomer. Interacts with PAK6. Interacts with the phosphorylated form of IKBKB/IKKB. It depends on Mg(2+) as a cofactor. Mn(2+) is required as a cofactor. In terms of processing, isgylation negatively regulates its activity. N-myristoylation is essential for the recognition of its substrates for dephosphorylation.

It localises to the cytoplasm. The protein resides in the cytosol. Its subcellular location is the membrane. The enzyme catalyses O-phospho-L-seryl-[protein] + H2O = L-seryl-[protein] + phosphate. It catalyses the reaction O-phospho-L-threonyl-[protein] + H2O = L-threonyl-[protein] + phosphate. In terms of biological role, enzyme with a broad specificity. Dephosphorylates PRKAA1 and PRKAA2. Inhibits TBK1-mediated antiviral signaling by dephosphorylating it at 'Ser-172'. Plays an important role in the termination of TNF-alpha-mediated NF-kappa-B activation through dephosphorylating and inactivating IKBKB/IKKB. The chain is Protein phosphatase 1B (Ppm1b) from Rattus norvegicus (Rat).